Reading from the N-terminus, the 55-residue chain is Large ribosomal subunit protein bL33 (55 aa).

It belongs to the bacterial ribosomal protein bL33 family.

The chain is Large ribosomal subunit protein bL33 from Rhizobium etli (strain CIAT 652).